A 253-amino-acid polypeptide reads, in one-letter code: Tetraspanin-11 (253 aa).

A run of 3 helical transmembrane segments spans residues 19-39, 63-83, and 93-113; these read LLFI…AVGI, ILIF…GAII, and YFCL…LAHV. Residue Asn127 is glycosylated (N-linked (GlcNAc...) asparagine). Residues 220–240 form a helical membrane-spanning segment; sequence LLLMGAVGIGVACLQICGMVL.

The protein belongs to the tetraspanin (TM4SF) family.

It is found in the membrane. The sequence is that of Tetraspanin-11 (Tspan11) from Mus musculus (Mouse).